A 202-amino-acid polypeptide reads, in one-letter code: Peptidyl-tRNA hydrolase (202 aa).

Residue tyrosine 22 coordinates tRNA. The Proton acceptor role is filled by histidine 27. 3 residues coordinate tRNA: phenylalanine 69, asparagine 71, and asparagine 117.

The protein belongs to the PTH family. As to quaternary structure, monomer.

The protein localises to the cytoplasm. The catalysed reaction is an N-acyl-L-alpha-aminoacyl-tRNA + H2O = an N-acyl-L-amino acid + a tRNA + H(+). Functionally, hydrolyzes ribosome-free peptidyl-tRNAs (with 1 or more amino acids incorporated), which drop off the ribosome during protein synthesis, or as a result of ribosome stalling. In terms of biological role, catalyzes the release of premature peptidyl moieties from peptidyl-tRNA molecules trapped in stalled 50S ribosomal subunits, and thus maintains levels of free tRNAs and 50S ribosomes. This chain is Peptidyl-tRNA hydrolase, found in Thiobacillus denitrificans (strain ATCC 25259 / T1).